The sequence spans 431 residues: Glucose-1-phosphate adenylyltransferase (431 aa).

Beta-D-fructose 1,6-bisphosphate is bound at residue lysine 39. 3 residues coordinate AMP: arginine 40, histidine 46, and arginine 52. Position 114 (tyrosine 114) interacts with alpha-D-glucose 1-phosphate. Arginine 130 lines the AMP pocket. Residues glycine 179, 194–195 (EK), and serine 212 contribute to the alpha-D-glucose 1-phosphate site. Residues glutamate 370 and arginine 386 each coordinate AMP. Beta-D-fructose 1,6-bisphosphate-binding positions include 419 to 423 (REMLR) and 429 to 431 (QER).

Belongs to the bacterial/plant glucose-1-phosphate adenylyltransferase family. Homotetramer.

It catalyses the reaction alpha-D-glucose 1-phosphate + ATP + H(+) = ADP-alpha-D-glucose + diphosphate. Its pathway is glycan biosynthesis; glycogen biosynthesis. Its activity is regulated as follows. Allosterically activated by fructose-1,6-bisphosphate (F16BP) and inhibited by AMP. In terms of biological role, involved in the biosynthesis of ADP-glucose, a building block required for the elongation reactions to produce glycogen. Catalyzes the reaction between ATP and alpha-D-glucose 1-phosphate (G1P) to produce pyrophosphate and ADP-Glc. This chain is Glucose-1-phosphate adenylyltransferase, found in Salmonella arizonae (strain ATCC BAA-731 / CDC346-86 / RSK2980).